Reading from the N-terminus, the 83-residue chain is Small ribosomal subunit protein bS20 (83 aa).

This sequence belongs to the bacterial ribosomal protein bS20 family.

Functionally, binds directly to 16S ribosomal RNA. The chain is Small ribosomal subunit protein bS20 from Flavobacterium psychrophilum (strain ATCC 49511 / DSM 21280 / CIP 103535 / JIP02/86).